A 154-amino-acid chain; its full sequence is 17.6 kDa class I heat shock protein (154 aa).

One can recognise a sHSP domain in the interval 40–154; sequence ENSAFVNTRV…SDVKPIEISG (115 aa).

Belongs to the small heat shock protein (HSP20) family. In terms of assembly, forms oligomeric structures.

It is found in the cytoplasm. The sequence is that of 17.6 kDa class I heat shock protein (HSP17.6-L) from Glycine max (Soybean).